A 152-amino-acid polypeptide reads, in one-letter code: 3-dehydroquinate dehydratase (152 aa).

Catalysis depends on Y23, which acts as the Proton acceptor. 3 residues coordinate substrate: N75, H81, and D88. The active-site Proton donor is the H101. Substrate contacts are provided by residues 102–103 and R112; that span reads IS.

Belongs to the type-II 3-dehydroquinase family. Homododecamer.

The enzyme catalyses 3-dehydroquinate = 3-dehydroshikimate + H2O. It participates in metabolic intermediate biosynthesis; chorismate biosynthesis; chorismate from D-erythrose 4-phosphate and phosphoenolpyruvate: step 3/7. Functionally, catalyzes a trans-dehydration via an enolate intermediate. The polypeptide is 3-dehydroquinate dehydratase (Alkalilimnicola ehrlichii (strain ATCC BAA-1101 / DSM 17681 / MLHE-1)).